The chain runs to 759 residues: NADP-dependent malic enzyme (759 aa).

Positions Met1–Asn428 are malic enzyme. Residue Tyr39 is the Proton donor of the active site. Lys56 carries the N6-acetyllysine modification. The Proton acceptor role is filled by Lys94. Residues Glu136, Asp137, and Asp162 each contribute to the a divalent metal cation site. Residues Ala195 to Ala198, Asn288, and Asn320 each bind NADP(+). Residues Leu429 to Leu759 are phosphate acetyltransferase; required for oligomerization, inhibition by acetyl-CoA and activation by glutamate, aspartate, and glucose-6-phosphate.

The protein in the N-terminal section; belongs to the malic enzymes family. This sequence in the C-terminal section; belongs to the phosphate acetyltransferase and butyryltransferase family. Homooligomer, possibly an octamer. Mg(2+) is required as a cofactor. The cofactor is Mn(2+).

The catalysed reaction is (S)-malate + NADP(+) = pyruvate + CO2 + NADPH. It carries out the reaction oxaloacetate + H(+) = pyruvate + CO2. Inhibited by 4 mM Mg(2+) and acetyl-CoA, competitively inhibited by fumarate and oxaloacetate. Activated by glutamate and aspartate, glucose-6-phosphate, acetyl-phosphate and 2 mM KCl. Functionally, catalyzes the decarboxylation of malate to pyruvate. In vitro, shows malolactic enzyme activity in the presence of NADPH. However, it is unlikely that this activity is of relevance in E.coli, which produces little NADPH. This chain is NADP-dependent malic enzyme (maeB), found in Escherichia coli (strain K12).